The primary structure comprises 577 residues: Maltase A1 (577 aa).

The first 19 residues, 1-19, serve as a signal peptide directing secretion; that stretch reads MRPQSAACLLLAIVGFVGA. N-linked (GlcNAc...) asparagine glycosylation is found at Asn119 and Asn151. Residue Asp221 is the Nucleophile of the active site. A glycan (N-linked (GlcNAc...) asparagine) is linked at Asn244. Glu297 acts as the Proton donor in catalysis. Residues Asn315 and Asn331 are each glycosylated (N-linked (GlcNAc...) asparagine).

This sequence belongs to the glycosyl hydrolase 13 family.

The catalysed reaction is Hydrolysis of terminal, non-reducing (1-&gt;4)-linked alpha-D-glucose residues with release of alpha-D-glucose.. The protein is Maltase A1 (Mal-A1) of Drosophila melanogaster (Fruit fly).